Consider the following 992-residue polypeptide: Aminopeptidase Q (992 aa).

Residues Gly-2–Arg-13 lie on the Cytoplasmic side of the membrane. Residues Ala-14 to Ala-34 traverse the membrane as a helical; Signal-anchor for type II membrane protein segment. Topologically, residues Ala-35–Thr-992 are extracellular. The tract at residues Asp-47–Gly-92 is disordered. N-linked (GlcNAc...) asparagine glycosylation occurs at Asn-133. Substrate is bound at residue Glu-241. N-linked (GlcNAc...) asparagine glycosylation is found at Asn-262, Asn-289, Asn-347, and Asn-361. Ser-380–Asn-384 contributes to the substrate binding site. His-416 provides a ligand contact to Zn(2+). Residue Glu-417 is the Proton acceptor of the active site. 2 residues coordinate Zn(2+): His-420 and Glu-439. Catalysis depends on Tyr-505, which acts as the Proton donor. Residues Asn-555, Asn-584, Asn-602, Asn-609, Asn-655, Asn-811, Asn-850, and Asn-889 are each glycosylated (N-linked (GlcNAc...) asparagine).

Belongs to the peptidase M1 family. The cofactor is Zn(2+). In terms of tissue distribution, expressed in skin. Expression levels do not differ between dark and light skin areas.

It localises to the membrane. Metalloprotease which may be important for placentation by regulating biological activity of key peptides at the embryo-maternal interface. Involved in coat pigmentation patterns. During skin development, may be required to establish the periodicity of tabby markings, initiating a pre-pattern at or before hair follicle development. The sequence is that of Aminopeptidase Q (LVRN) from Felis catus (Cat).